A 24-amino-acid polypeptide reads, in one-letter code: U1-plectoxin-Pt1e (24 aa).

Cys-4 and Cys-18 are oxidised to a cystine.

Belongs to the neurotoxin 02 (plectoxin) family. 02 (plectoxin) subfamily. Post-translationally, contains 5 disulfide bonds. As to expression, expressed by the venom gland.

The protein resides in the secreted. Functionally, potent toxin that may paralyze and/or kill insect pests such as H.virescens (lepidoptera), S.exigua (beet armyworm) and M.sexta (tobacco hornworm). This is U1-plectoxin-Pt1e from Plectreurys tristis (Spider).